A 104-amino-acid polypeptide reads, in one-letter code: Large ribosomal subunit protein uL24 (104 aa).

Belongs to the universal ribosomal protein uL24 family. Part of the 50S ribosomal subunit.

In terms of biological role, one of two assembly initiator proteins, it binds directly to the 5'-end of the 23S rRNA, where it nucleates assembly of the 50S subunit. Its function is as follows. One of the proteins that surrounds the polypeptide exit tunnel on the outside of the subunit. The sequence is that of Large ribosomal subunit protein uL24 from Salmonella paratyphi A (strain ATCC 9150 / SARB42).